We begin with the raw amino-acid sequence, 436 residues long: 3-ketoacyl-CoA thiolase (436 aa).

Catalysis depends on Cys99, which acts as the Acyl-thioester intermediate. Catalysis depends on proton acceptor residues His392 and Cys422.

The protein belongs to the thiolase-like superfamily. Thiolase family. In terms of assembly, heterotetramer of two alpha chains (FadJ) and two beta chains (FadI).

It localises to the cytoplasm. It carries out the reaction an acyl-CoA + acetyl-CoA = a 3-oxoacyl-CoA + CoA. Its pathway is lipid metabolism; fatty acid beta-oxidation. In terms of biological role, catalyzes the final step of fatty acid oxidation in which acetyl-CoA is released and the CoA ester of a fatty acid two carbons shorter is formed. This chain is 3-ketoacyl-CoA thiolase, found in Shigella dysenteriae serotype 1 (strain Sd197).